The chain runs to 646 residues: Hypoxia up-regulated protein 1 (646 aa).

An N-terminal signal peptide occupies residues 1 to 22 (MRPLVCVLWMFLFALLSSHTES). The interval 572 to 646 (LFGGGSSVSE…KEEEKAEPQE (75 aa)) is disordered. A compositionally biased stretch (acidic residues) spans 590–610 (VQEEDEVPTEPTKEEEQESAD). Residues 611–646 (PADKQQDKENNKEKGTSATNEKEEGKKEEEKAEPQE) show a composition bias toward basic and acidic residues.

This sequence belongs to the heat shock protein 70 family.

The protein localises to the endoplasmic reticulum lumen. Its function is as follows. Has a pivotal role in cytoprotective cellular mechanisms triggered by oxygen deprivation. May play a role as a molecular chaperone and participate in protein folding. In Xenopus laevis (African clawed frog), this protein is Hypoxia up-regulated protein 1 (hyou1).